The chain runs to 287 residues: Cyclopropane mycolic acid synthase MmaA2 (287 aa).

Residues 33–34 (YS), 72–74 (GCG), 94–99 (TLSKNQ), 123–124 (WE), and I136 each bind S-adenosyl-L-methionine. Residue C269 is part of the active site.

It belongs to the CFA/CMAS family.

The enzyme catalyses a 1-acyl-2-(9Z)-enoyl-sn-glycero-3-phospholipid + S-adenosyl-L-methionine = a 1-acyl-2-(9-cyclopronane)-acyl-sn-glycero-3-phospholipid + S-adenosyl-L-homocysteine + H(+). It participates in lipid metabolism; mycolic acid biosynthesis. Its function is as follows. Catalyzes the conversion of a double bond to a cis cyclopropane ring at the distal position of an alpha mycolic acid via the transfer of a methylene group from S-adenosyl-L-methionine. MmaA2 also catalyzes the biosynthesis of the cis-cyclopropanated methoxymycolates. Cyclopropanated mycolic acids are key factors participating in cell envelope permeability, host immunomodulation and persistence. The sequence is that of Cyclopropane mycolic acid synthase MmaA2 (cmaC) from Mycobacterium bovis (strain ATCC BAA-935 / AF2122/97).